The primary structure comprises 198 residues: Na(+)-translocating NADH-quinone reductase subunit E (198 aa).

6 helical membrane-spanning segments follow: residues 11 to 31 (AVFIENMALAFFLGMCTFLAV), 39 to 59 (FGLGIAVTVVLGLSVPLNNLV), 77 to 97 (FLNFITFIGVIAALVQILEMI), 109 to 129 (LGIFLPLITVNCAIFGGVSFM), 140 to 160 (IVYGFGSGIGWMLAIVLLASI), and 176 to 196 (LGVTFVTTGLMALGFMSFSGV).

Belongs to the NqrDE/RnfAE family. In terms of assembly, composed of six subunits; NqrA, NqrB, NqrC, NqrD, NqrE and NqrF.

The protein localises to the cell inner membrane. It catalyses the reaction a ubiquinone + n Na(+)(in) + NADH + H(+) = a ubiquinol + n Na(+)(out) + NAD(+). NQR complex catalyzes the reduction of ubiquinone-1 to ubiquinol by two successive reactions, coupled with the transport of Na(+) ions from the cytoplasm to the periplasm. NqrA to NqrE are probably involved in the second step, the conversion of ubisemiquinone to ubiquinol. The chain is Na(+)-translocating NADH-quinone reductase subunit E from Proteus mirabilis (strain HI4320).